We begin with the raw amino-acid sequence, 468 residues long: Immunoglobulin superfamily member 21 (468 aa).

An N-terminal signal peptide occupies residues 1–24 (MQAAPSLRRASCLLLAAILDLARG). The Ig-like 1 domain occupies 25–132 (YLTVNIEPLP…RATREKVVLA (108 aa)). A disulfide bridge links C46 with C116. 3 N-linked (GlcNAc...) asparagine glycosylation sites follow: N82, N165, and N407. Residues 344 to 429 (PKIMMTPSRA…GSTDTHTRLI (86 aa)) form the Ig-like 2 domain.

As to quaternary structure, interacts (Ig-like 1 domain) with NRXN2 (via Laminin G-like 1 domain) in a trans-interaction manner. As to expression, expressed in brain (at protein levels). Highly expressed in the pyramidal cell layer of the dorsal and ventral hippocampal CA1 and CA3 regions, layers 5 and 6 of the cortex, the thalamus and the pons and weakly expressed in the cerebellum. Expressed in neurons but not in glia.

Its subcellular location is the postsynaptic cell membrane. Its function is as follows. Involved in synaptic inhibition in the brain. Selectively regulates inhibitory presynaptic differentiation through interacting with presynaptic NRXN2. This chain is Immunoglobulin superfamily member 21 (Igsf21), found in Mus musculus (Mouse).